The following is a 251-amino-acid chain: Cell division protein ZapD (251 aa).

This sequence belongs to the ZapD family. Interacts with FtsZ.

It localises to the cytoplasm. Functionally, cell division factor that enhances FtsZ-ring assembly. Directly interacts with FtsZ and promotes bundling of FtsZ protofilaments, with a reduction in FtsZ GTPase activity. The polypeptide is Cell division protein ZapD (Burkholderia orbicola (strain MC0-3)).